The sequence spans 225 residues: Uridylate kinase (225 aa).

7–11 (KISGS) provides a ligand contact to ATP. Gly-44 is a binding site for UMP. ATP is bound by residues Gly-45 and Arg-49. UMP is bound by residues Asp-66 and 114 to 120 (FQPGQST). Residues Tyr-147 and Glu-150 each coordinate ATP.

Belongs to the UMP kinase family. As to quaternary structure, homohexamer.

The protein resides in the cytoplasm. It catalyses the reaction UMP + ATP = UDP + ADP. It functions in the pathway pyrimidine metabolism; CTP biosynthesis via de novo pathway; UDP from UMP (UMPK route): step 1/1. With respect to regulation, inhibited by UTP. Its function is as follows. Catalyzes the reversible phosphorylation of UMP to UDP. The protein is Uridylate kinase of Aeropyrum pernix (strain ATCC 700893 / DSM 11879 / JCM 9820 / NBRC 100138 / K1).